We begin with the raw amino-acid sequence, 309 residues long: tRNA pseudouridine synthase B (309 aa).

The active-site Nucleophile is Asp52.

This sequence belongs to the pseudouridine synthase TruB family. Type 1 subfamily.

It catalyses the reaction uridine(55) in tRNA = pseudouridine(55) in tRNA. Responsible for synthesis of pseudouridine from uracil-55 in the psi GC loop of transfer RNAs. The sequence is that of tRNA pseudouridine synthase B from Leptospira interrogans serogroup Icterohaemorrhagiae serovar copenhageni (strain Fiocruz L1-130).